Here is a 285-residue protein sequence, read N- to C-terminus: Protein phosphatase 1 regulatory subunit 3C (285 aa).

The short motif at 72–75 (KVVF) is the PP1-binding motif element. The region spanning 133–241 (RKRLMKNSVC…NNNGKNYALV (109 aa)) is the CBM21 domain.

As to quaternary structure, interacts with PPP1CC catalytic subunit of PP1 and associates with glycogen. Forms complexes with glycogen phosphorylase, glycogen synthase and phosphorylase kinase which is necessary for its regulation of PP1 activity. Ubiquitously expressed in the examined tissues including brain, muscle, liver and spleen under normoxic condition. Its expression is higher in insulin sensitive tissues (liver and muscle) than in the brain and spleen. Significantly increased expression in the liver and muscle under short-term (1-12 hours) hypoxia exposure. Significantly increased expression after long-term (natural) hypoxia exposure in liver and spleen. No significant differences in expression in brain for any time periods.

Functionally, acts as a glycogen-targeting subunit for PP1 and regulates its activity. Activates glycogen synthase, reduces glycogen phosphorylase activity and limits glycogen breakdown. This is Protein phosphatase 1 regulatory subunit 3C from Clarias batrachus (Walking catfish).